We begin with the raw amino-acid sequence, 274 residues long: Methionine aminopeptidase B (274 aa).

Residue His-102 participates in substrate binding. A divalent metal cation is bound by residues Asp-120, Asp-131, and His-194. Substrate is bound at residue His-201. Residues Glu-227 and Glu-258 each coordinate a divalent metal cation.

It belongs to the peptidase M24A family. Methionine aminopeptidase type 1 subfamily. As to quaternary structure, monomer. The cofactor is Co(2+). Zn(2+) serves as cofactor. It depends on Mn(2+) as a cofactor. Fe(2+) is required as a cofactor.

The catalysed reaction is Release of N-terminal amino acids, preferentially methionine, from peptides and arylamides.. Its function is as follows. Removes the N-terminal methionine from nascent proteins. The N-terminal methionine is often cleaved when the second residue in the primary sequence is small and uncharged (Met-Ala-, Cys, Gly, Pro, Ser, Thr, or Val). Requires deformylation of the N(alpha)-formylated initiator methionine before it can be hydrolyzed. This is Methionine aminopeptidase B from Synechocystis sp. (strain ATCC 27184 / PCC 6803 / Kazusa).